Reading from the N-terminus, the 237-residue chain is Protein CUSTOS (237 aa).

3 disordered regions span residues 1 to 23 (MAAP…LDRF), 50 to 69 (LRVR…TTPE), and 97 to 237 (ISKA…LGNE). Positions 52 to 62 (VRPDCHEHDGN) are enriched in basic and acidic residues. Polar residues predominate over residues 162–177 (STLQQEPQSTPSNVCD). The span at 181–190 (PKKKRKKKKK) shows a compositional bias: basic residues. The Nucleolar localization signal (NLS1) signature appears at 182–190 (KKKRKKKKK). 2 stretches are compositionally biased toward basic and acidic residues: residues 203–216 (ETMH…ELQA) and 225–237 (KLEM…LGNE). Positions 217–225 (KRKKKKKQK) match the Nucleolar localization signal (NLS2) motif.

This sequence belongs to the CUSTOS family. In terms of assembly, interacts (via NLS1 and NLS2) with dvl2; the interaction is negatively regulated by Wnt stimulation. Interacts with csnk1a1. Interacts with ctnnb1; the interaction is positively regulated by Wnt stimulation. Phosphorylated by ck1/csnk1a1.

The protein localises to the nucleus envelope. In terms of biological role, essential for Spemann-Mangold organizer formation and subsequent anterior head development in the embryo. Inhibits canonical Wnt signaling pathway by antagonizing nuclear import of beta-catenin (ctnnb1) during embryogenesis. The protein is Protein CUSTOS of Xenopus laevis (African clawed frog).